A 419-amino-acid polypeptide reads, in one-letter code: Light-dependent chlorophyll f synthase (419 aa).

5 helical membrane passes run 73–90 (YIGW…TAAI), 162–177 (HFII…EWEL), 186–200 (WISL…ASVS), 241–262 (LHQM…HGSL), and 323–337 (CLAA…SAAI). Histidine 162 is a binding site for a chlorophyll. Residue histidine 242 coordinates a chlorophyll.

Belongs to the reaction center PufL/M/PsbA/D family. As to quaternary structure, homodimer.

The protein localises to the cellular thylakoid membrane. In terms of biological role, synthesizes chlorophyll f or chlorophyllide f (Chl f, 2-formyl chlorophyll a), probably by oxidation of chlorophyll a or chlorophyllide a and reduction of plastoquinone. The reaction is probably light-dependent. Chl f absorbs far red light (FRL, 707 nm in 100% methanol), and is synthesized when cells are grown in FRL, where it provides the advantage of extending the spectral range of harvested light in terrestrial cyanobacteria. Chl f synthesis is probably light-dependent. The chain is Light-dependent chlorophyll f synthase from Synechococcus sp. (strain ATCC 29403 / PCC 7335).